Here is a 417-residue protein sequence, read N- to C-terminus: V-set and immunoglobulin domain-containing protein 8 (417 aa).

A signal peptide spans 1–21; the sequence is MGVRGALHLLLVCLSPALLSA. Ig-like V-type domains are found at residues 22–140 and 145–256; these read VRIN…VIVT and PAVP…VKVS. The Extracellular portion of the chain corresponds to 22–262; sequence VRINGDGQEV…VKVSDSQRVG (241 aa). 2 cysteine pairs are disulfide-bonded: C44–C125 and C166–C238. The helical transmembrane segment at 263–283 threads the bilayer; it reads MIVGAVLGSLLMLACLALGIW. The Cytoplasmic portion of the chain corresponds to 284-417; the sequence is GLICCCCGGG…QRSCKDGLLV (134 aa).

It is found in the membrane. In Mus musculus (Mouse), this protein is V-set and immunoglobulin domain-containing protein 8 (Vsig8).